Reading from the N-terminus, the 796-residue chain is Merozoite surface protein P92 (796 aa).

Positions M1–A26 are cleaved as a signal peptide. N27, N37, N65, N71, N168, N240, N275, N359, N502, N511, N607, N633, N728, and N765 each carry an N-linked (GlcNAc...) asparagine glycan. Residues K571–K720 enclose the 6-Cys domain. Disulfide bonds link C614–C691 and C625–C689.

As to quaternary structure, interacts with host complement factor CFH isoform 1 (via sushi 4-6 domains) and CFH isoform FHL-1 (via sushi 4-6 domains); this interaction recruits CFH onto the merozoite surface preventing complement-mediated cell lysis. The interaction does not affect CFH activity.

It localises to the cell surface. The protein resides in the cell membrane. Functionally, during the asexual blood stage, recruits host complement factor H CFH to the surface of merozoites resulting in the down-regulation of the host complement alternative pathway and thus, protecting merozoites from complement-mediated lysis. In Plasmodium falciparum (isolate 3D7), this protein is Merozoite surface protein P92.